The chain runs to 307 residues: O-acetylserine dependent cystathionine beta-synthase (307 aa).

At Lys-44 the chain carries N6-(pyridoxal phosphate)lysine. Pyridoxal 5'-phosphate contacts are provided by residues Asn-74, 178-182 (GSGGT), and Ser-265.

The protein belongs to the cysteine synthase/cystathionine beta-synthase family. Pyridoxal 5'-phosphate is required as a cofactor.

The enzyme catalyses O-acetyl-L-serine + L-homocysteine = L,L-cystathionine + acetate + H(+). In terms of biological role, catalyzes the conversion of O-acetylserine and homocysteine to cystathionine. The sequence is that of O-acetylserine dependent cystathionine beta-synthase (mccA) from Bacillus subtilis (strain 168).